The sequence spans 145 residues: MRTTYMAKPNEVERKWYVVDAAGKTLGRLASEVAALLRGKHKPTFTPHVDCGDHVIVINADKVELTGKKLTKKLYYRHSLYPGGLKVRTALEMRTNYPEQMIERAVRGMLPKGSLGRQMFKKLHVYRGSEHPHQAQKPEVYELRG.

This sequence belongs to the universal ribosomal protein uL13 family. Part of the 50S ribosomal subunit.

This protein is one of the early assembly proteins of the 50S ribosomal subunit, although it is not seen to bind rRNA by itself. It is important during the early stages of 50S assembly. The polypeptide is Large ribosomal subunit protein uL13 (Geobacillus kaustophilus (strain HTA426)).